Consider the following 1042-residue polypeptide: Elongation factor 3 (1042 aa).

HEAT repeat units follow at residues 9 to 46 (KVLM…DPDT), 86 to 124 (PYLV…TMNP), 167 to 204 (YRLP…LISN), 206 to 242 (DIDK…EVHA), 243 to 280 (STLS…LVED), and 289 to 327 (PKLI…VKEG). ABC transporter domains follow at residues 425 to 642 (EEGE…YQDI) and 668 to 994 (CRMR…EQEE). 4 residues coordinate ADP: Asn-704, Glu-923, Asn-926, and His-952. The segment at 1009–1042 (KKAKKLTSSELRKKKKERMARRKKGEEVFSDEDD) is disordered. Residues 1020–1031 (RKKKKERMARRK) are compositionally biased toward basic residues.

This sequence belongs to the ABC transporter superfamily. ABCF family. EF3 subfamily. Monomer.

Its subcellular location is the cytoplasm. It carries out the reaction ATP + H2O = ADP + phosphate + H(+). It participates in protein biosynthesis; polypeptide chain elongation. Its function is as follows. Ribosome-dependent ATPase that functions in cytoplasmic translation elongation. Required for the ATP-dependent release of deacylated tRNA from the ribosomal E-site during protein biosynthesis. Stimulates the eEF1A-dependent binding of aminoacyl-tRNA to the ribosomal A-site, which has reduced affinity for tRNA as long as the E-site is occupied. Assists translation termination by stimulating the release of nascent protein from the ribosome by release factors. The sequence is that of Elongation factor 3 (TEF3) from Pneumocystis carinii.